Here is a 257-residue protein sequence, read N- to C-terminus: uncharacterized protein (257 aa).

6 helical membrane-spanning segments follow: residues 23–43, 79–99, 131–151, 158–178, 199–219, and 221–241; these read VLTD…EGLL, FIFI…VLGA, TFGI…AFSV, FAVS…ILMM, AFVL…HYEM, and HSVF…IHYI.

It belongs to the TerC family.

Its subcellular location is the cell membrane. This is an uncharacterized protein from Bacillus subtilis (strain 168).